The sequence spans 70 residues: uncharacterized protein (70 aa).

2 consecutive transmembrane segments (helical) span residues 13 to 33 and 39 to 59; these read YYAFAIGLIFILNGVVGLLGF and QTYAVGLVTWVISFWLAGLII.

It is found in the cell membrane. This is an uncharacterized protein from Escherichia coli O6:H1 (strain CFT073 / ATCC 700928 / UPEC).